Here is a 202-residue protein sequence, read N- to C-terminus: LexA repressor 2 (202 aa).

The segment at residues 28-48 is a DNA-binding region (H-T-H motif); it reads LAEISEAFGFASRSVARKHIV. Residues Ser-123 and Lys-160 each act as for autocatalytic cleavage activity in the active site.

This sequence belongs to the peptidase S24 family. Homodimer.

The catalysed reaction is Hydrolysis of Ala-|-Gly bond in repressor LexA.. Functionally, represses a number of genes involved in the response to DNA damage (SOS response), including recA and lexA. In the presence of single-stranded DNA, RecA interacts with LexA causing an autocatalytic cleavage which disrupts the DNA-binding part of LexA, leading to derepression of the SOS regulon and eventually DNA repair. This is LexA repressor 2 from Pseudomonas syringae pv. tomato (strain ATCC BAA-871 / DC3000).